Consider the following 361-residue polypeptide: [LysW]-lysine hydrolase (361 aa).

H67 contacts Zn(2+). D69 is an active-site residue. D91 is a Zn(2+) binding site. E124 serves as the catalytic Proton acceptor. Residues E125, E148, and H326 each coordinate Zn(2+).

The protein belongs to the peptidase M20A family. LysK subfamily. As to quaternary structure, homotetramer and homooctamer. The cofactor is Zn(2+). It depends on Co(2+) as a cofactor.

The protein localises to the cytoplasm. It carries out the reaction [amino-group carrier protein]-C-terminal-gamma-(L-lysyl)-L-glutamate + H2O = [amino-group carrier protein]-C-terminal-L-glutamate + L-lysine. Its pathway is amino-acid biosynthesis; L-lysine biosynthesis via AAA pathway; L-lysine from L-alpha-aminoadipate (Thermus route): step 5/5. Catalyzes the release of L-lysine from [LysW]-gamma-L-lysine. In vitro, can deacetylate both N(2)-acetyl-L-lysine and N(2)-acetyl-L-ornithine. The sequence is that of [LysW]-lysine hydrolase from Thermus thermophilus (strain ATCC BAA-163 / DSM 7039 / HB27).